The chain runs to 210 residues: N-(5'-phosphoribosyl)anthranilate isomerase (210 aa).

The protein belongs to the TrpF family.

The catalysed reaction is N-(5-phospho-beta-D-ribosyl)anthranilate = 1-(2-carboxyphenylamino)-1-deoxy-D-ribulose 5-phosphate. The protein operates within amino-acid biosynthesis; L-tryptophan biosynthesis; L-tryptophan from chorismate: step 3/5. This chain is N-(5'-phosphoribosyl)anthranilate isomerase, found in Pseudomonas fluorescens (strain SBW25).